The sequence spans 833 residues: Urease (833 aa).

A Urease domain is found at 395–833 (GALDVHVHYI…LPLTRRYFVY (439 aa)). Ni(2+) contacts are provided by histidine 400 and histidine 402. Residues histidine 402 and alanine 433 each contribute to the urea site. Lysine 483 serves as a coordination point for Ni(2+). Lysine 483 carries the post-translational modification N6-carboxylysine. Residues histidine 485 and histidine 512 each contribute to the urea site. Histidine 512 and histidine 538 together coordinate Ni(2+). The active-site Proton donor is histidine 586. Aspartate 626 contributes to the Ni(2+) binding site. Alanine 629 is a binding site for urea.

It in the C-terminal section; belongs to the metallo-dependent hydrolases superfamily. Urease alpha subunit family. Homohexamer. Requires Ni(2+) as cofactor. Post-translationally, carboxylation allows a single lysine to coordinate two nickel ions.

The catalysed reaction is urea + 2 H2O + H(+) = hydrogencarbonate + 2 NH4(+). Its pathway is nitrogen metabolism; urea degradation; CO(2) and NH(3) from urea (urease route): step 1/1. With respect to regulation, the urease accessory proteins URE4, URE6 and URE7 are required for urease activity, URE7 supplying nickel for the functional urease. Its function is as follows. Plays a nutritional role via nitrogen acquisition in the environment. Contributes to the central nervous system invasion by enhancing yeast sequestration within microcapillary beds (such as within the brain) during hematogenous spread, thereby facilitating blood-to-brain invasion by C.neoformans. Affects fitness within the mammalian phagosome, promoting non-lytic exocytosis while delaying intracellular replication and thus reducing phagolysosomal membrane damage, events that could facilitate cryptococcal dissemination when transported inside macrophages. Urease activity is also associated with the regulation of key intracellular metabolic pathways, including melanin biosynthesis, polyamine biosynthesis, as well as intracellular levels of proline and reactive oxygen species. The sequence is that of Urease from Cryptococcus neoformans var. grubii serotype A (strain H99 / ATCC 208821 / CBS 10515 / FGSC 9487) (Filobasidiella neoformans var. grubii).